Here is a 458-residue protein sequence, read N- to C-terminus: MGRLFGTDGVRGLANGSLSPELALRVSGAAAQVLGRGKTRALALVGRDPRASGEMLEAAVTAGLTAAGVNVLSVGVLPTPAVAYLTGLYDACLGVMISASHNPMPDNGIKIFAAGGHKLDDAVEDRIEALVAADDPVRPTGAGIGRVLNASGARDHGLHIPDQYSVEGTHERYVEHLVEATGRDLSGLTVVVDCANGAAAEVGPAAYREAGATVIAINAEPDGLNINDGCGSTHLDQVRRAVVEHGADLGLAHDGDADRCLAVAADGSVVDGDAILAVLAIAMKESGELAQDTLVATVMSNLGLHLAMRAAGIAVRTTAVGDRYVLEELRAGGYTLGGEQSGHVVFPKYGTTGDGVLTGLKLMARMAQTGRSLADLAGVLTTVPQVLVNVPVSDKAAVAAAPDVREAVADAERELGDSGRILLRPSGTEQLVRVMVEATDPVKAEQLAADLAKLVASL.

S100 (phosphoserine intermediate) is an active-site residue. S100, D254, D256, and D258 together coordinate Mg(2+). Residue S100 is modified to Phosphoserine.

It belongs to the phosphohexose mutase family. Mg(2+) is required as a cofactor. In terms of processing, activated by phosphorylation.

It catalyses the reaction alpha-D-glucosamine 1-phosphate = D-glucosamine 6-phosphate. Its function is as follows. Catalyzes the conversion of glucosamine-6-phosphate to glucosamine-1-phosphate. This chain is Phosphoglucosamine mutase, found in Nocardia farcinica (strain IFM 10152).